Reading from the N-terminus, the 388-residue chain is Type II secretion system protein F (388 aa).

A disordered region spans residues 1 to 28; that stretch reads MTEGDSARQVRQQLREQGLTPLEVNETT. Residues 1-153 lie on the Cytoplasmic side of the membrane; it reads MTEGDSARQV…HMRTKLLQAM (153 aa). 3 residues coordinate Ca(2+): glutamate 79, asparagine 133, and aspartate 137. The helical transmembrane segment at 154-174 threads the bilayer; sequence IYPIVLTLVAVGVISILLTAV. The Periplasmic segment spans residues 175 to 205; the sequence is VPKVVAQFEHMGQQLPATTRFLIGTSELMQH. Residues 206-226 form a helical membrane-spanning segment; sequence YGLWFLLLLFIGGFVWRWWLT. Residues 227-350 lie on the Cytoplasmic side of the membrane; the sequence is DEKRRRHWHQ…QDREFETQVN (124 aa). Residues 351–371 form a helical membrane-spanning segment; the sequence is IALGVFEPLLVVSMAGVVLFI. The Periplasmic portion of the chain corresponds to 372–388; that stretch reads VMSILQPILELNNMVNL.

The protein belongs to the GSP F family. As to quaternary structure, type II secretion system is composed of four main components: the outer membrane complex, the inner membrane complex, the cytoplasmic secretion ATPase and the periplasm-spanning pseudopilus. Homodimer. Interacts with ExeE and ExeL components.

The protein localises to the cell inner membrane. Its function is as follows. Component of the type II secretion system inner membrane complex required for the energy-dependent secretion of extracellular factors such as proteases and toxins from the periplasm. This is Type II secretion system protein F (exeF) from Aeromonas hydrophila.